A 205-amino-acid polypeptide reads, in one-letter code: ATP-dependent Clp protease proteolytic subunit (205 aa).

S107 functions as the Nucleophile in the catalytic mechanism. H132 is a catalytic residue.

It belongs to the peptidase S14 family. As to quaternary structure, fourteen ClpP subunits assemble into 2 heptameric rings which stack back to back to give a disk-like structure with a central cavity, resembling the structure of eukaryotic proteasomes.

It is found in the cytoplasm. It carries out the reaction Hydrolysis of proteins to small peptides in the presence of ATP and magnesium. alpha-casein is the usual test substrate. In the absence of ATP, only oligopeptides shorter than five residues are hydrolyzed (such as succinyl-Leu-Tyr-|-NHMec, and Leu-Tyr-Leu-|-Tyr-Trp, in which cleavage of the -Tyr-|-Leu- and -Tyr-|-Trp bonds also occurs).. Functionally, cleaves peptides in various proteins in a process that requires ATP hydrolysis. Has a chymotrypsin-like activity. Plays a major role in the degradation of misfolded proteins. In Pseudoalteromonas translucida (strain TAC 125), this protein is ATP-dependent Clp protease proteolytic subunit.